The sequence spans 430 residues: N-lysine methyltransferase SMYD2-A (430 aa).

Positions 5–239 (EGLERFDSPG…AGDEVFTSYI (235 aa)) constitute an SET domain. An S-adenosyl-L-methionine-binding site is contributed by 15–17 (KGR). Residues Cys-50, Cys-53, Cys-63, Cys-66, Cys-72, Cys-76, His-84, and Cys-88 each coordinate Zn(2+). The MYND-type zinc-finger motif lies at 50-88 (CDFCFARKEGLSKCGKCKQAFYCNVDCQKGDWPMHKLEC). S-adenosyl-L-methionine contacts are provided by residues His-135, 204–205 (NH), and 256–258 (YFF).

Belongs to the class V-like SAM-binding methyltransferase superfamily.

It is found in the cytoplasm. Its subcellular location is the cytosol. It localises to the nucleus. It catalyses the reaction L-lysyl(4)-[histone H3] + 3 S-adenosyl-L-methionine = N(6),N(6),N(6)-trimethyl-L-lysyl(4)-[histone H3] + 3 S-adenosyl-L-homocysteine + 3 H(+). It carries out the reaction L-lysyl-[protein] + S-adenosyl-L-methionine = N(6)-methyl-L-lysyl-[protein] + S-adenosyl-L-homocysteine + H(+). Protein-lysine N-methyltransferase that methylates both histones and non-histone proteins, including p53/TP53 and RB1. Specifically trimethylates histone H3 'Lys-4' (H3K4me3) in vivo. The activity requires interaction with HSP90alpha. Shows even higher methyltransferase activity on p53/TP53. Monomethylates 'Lys-370' of p53/TP53, leading to decreased DNA-binding activity and subsequent transcriptional regulation activity of p53/TP53. Monomethylates RB1 at 'Lys-860'. The chain is N-lysine methyltransferase SMYD2-A (smyd2-a) from Xenopus laevis (African clawed frog).